The following is a 352-amino-acid chain: Histidinol-phosphate aminotransferase (352 aa).

N6-(pyridoxal phosphate)lysine is present on Lys221.

Belongs to the class-II pyridoxal-phosphate-dependent aminotransferase family. Histidinol-phosphate aminotransferase subfamily. Homodimer. Pyridoxal 5'-phosphate serves as cofactor.

It carries out the reaction L-histidinol phosphate + 2-oxoglutarate = 3-(imidazol-4-yl)-2-oxopropyl phosphate + L-glutamate. It participates in amino-acid biosynthesis; L-histidine biosynthesis; L-histidine from 5-phospho-alpha-D-ribose 1-diphosphate: step 7/9. In Staphylococcus aureus (strain MRSA252), this protein is Histidinol-phosphate aminotransferase.